A 318-amino-acid chain; its full sequence is MNLNYLDFEQPIADLEGKIEELQLVGSGNALNLSDELERLRQKSAKQTESIYSNLTPWQIVQVARHPQRPYSSDYISRMFEDWDELHGDRHFGDDKAIIGGVGRIDGKPVMVIGEEKGRSVKDKVYRNFGMPKPEGYRKALRLMEMAERFKMPVLTLIDTPGAYPGIDSEERGISESIAQNLAVMSRLRTPIICTVIGEGSSGGALAIGVGDQLNMLQYSTYFVISPEGCANIIWKTVEKAPLAAEAMGVTSSVLADLGIVDETIPEPLGGAHRDIDAMALKLKERLVSQLDRLQAVPIEELLDTRYQRLMSYGNSAV.

Positions 32–293 (NLSDELERLR…KERLVSQLDR (262 aa)) constitute a CoA carboxyltransferase C-terminal domain.

Belongs to the AccA family. In terms of assembly, acetyl-CoA carboxylase is a heterohexamer composed of biotin carboxyl carrier protein (AccB), biotin carboxylase (AccC) and two subunits each of ACCase subunit alpha (AccA) and ACCase subunit beta (AccD).

It localises to the cytoplasm. The catalysed reaction is N(6)-carboxybiotinyl-L-lysyl-[protein] + acetyl-CoA = N(6)-biotinyl-L-lysyl-[protein] + malonyl-CoA. The protein operates within lipid metabolism; malonyl-CoA biosynthesis; malonyl-CoA from acetyl-CoA: step 1/1. Its function is as follows. Component of the acetyl coenzyme A carboxylase (ACC) complex. First, biotin carboxylase catalyzes the carboxylation of biotin on its carrier protein (BCCP) and then the CO(2) group is transferred by the carboxyltransferase to acetyl-CoA to form malonyl-CoA. The sequence is that of Acetyl-coenzyme A carboxylase carboxyl transferase subunit alpha from Saccharophagus degradans (strain 2-40 / ATCC 43961 / DSM 17024).